We begin with the raw amino-acid sequence, 739 residues long: Long-chain-fatty-acid--CoA ligase ACSBG2 (739 aa).

ATP is bound by residues 287–295 (TSGTTGQPK), 478–483 (ELYGMS), aspartate 556, arginine 571, and lysine 684.

Belongs to the ATP-dependent AMP-binding enzyme family. Bubblegum subfamily.

It is found in the cytoplasm. The enzyme catalyses a long-chain fatty acid + ATP + CoA = a long-chain fatty acyl-CoA + AMP + diphosphate. It catalyses the reaction (5Z,8Z,11Z,14Z)-eicosatetraenoate + ATP + CoA = (5Z,8Z,11Z,14Z)-eicosatetraenoyl-CoA + AMP + diphosphate. It carries out the reaction hexadecanoate + ATP + CoA = hexadecanoyl-CoA + AMP + diphosphate. The catalysed reaction is (9Z)-octadecenoate + ATP + CoA = (9Z)-octadecenoyl-CoA + AMP + diphosphate. The enzyme catalyses (9Z,12Z)-octadecadienoate + ATP + CoA = (9Z,12Z)-octadecadienoyl-CoA + AMP + diphosphate. It catalyses the reaction tetracosanoate + ATP + CoA = tetracosanoyl-CoA + AMP + diphosphate. Its function is as follows. Catalyzes the conversion of fatty acids such as long chain and very long-chain fatty acids to their active form acyl-CoAs for both synthesis of cellular lipids, and degradation via beta-oxidation. Can activate diverse saturated, monosaturated and polyunsaturated fatty acids. This Xenopus laevis (African clawed frog) protein is Long-chain-fatty-acid--CoA ligase ACSBG2.